Here is a 105-residue protein sequence, read N- to C-terminus: Nucleoid-associated protein SE_2306 (105 aa).

A disordered region spans residues 1–40 (MRGGGNMQQMMKQMQKMQKKMAQEQEKLKEERVAGTAGGG). The segment covering 7–16 (MQQMMKQMQK) has biased composition (low complexity). Residues 21 to 33 (MAQEQEKLKEERV) show a composition bias toward basic and acidic residues.

Belongs to the YbaB/EbfC family. As to quaternary structure, homodimer.

It localises to the cytoplasm. The protein resides in the nucleoid. In terms of biological role, binds to DNA and alters its conformation. May be involved in regulation of gene expression, nucleoid organization and DNA protection. The protein is Nucleoid-associated protein SE_2306 of Staphylococcus epidermidis (strain ATCC 12228 / FDA PCI 1200).